Reading from the N-terminus, the 393-residue chain is Purine permease 14 (393 aa).

Ala2 carries the post-translational modification N-acetylalanine. A run of 10 helical transmembrane segments spans residues 46-66, 90-110, 133-153, 161-181, 189-209, 225-245, 268-288, 308-328, 339-359, and 363-383; these read WPTITISIIFVIIGQSIAKLL, TQSLLQTVGFPLLLLPFLIFI, LAVIYICIGIIMSVQGRLAAM, GVFTLIYTAQLFFTPIFAAFI, WVVISVILAIITGALTLSSSF, WAALFAGICFALLLCNIQNVF, VIIFSSLVATIISVVGLLIAG, VMAMVGQAVSWQVYWVGIVGL, VISVITWPIVSVLVVIFFNFM, and FDAFKGVALVTAVLSAAAYFF.

It belongs to the purine permeases (TC 2.A.7.14) family. Expressed in seedlings, leaves, embryos, ovules, seeds and the root and shoot meristems. In heart-stage embryos, detected in cells that failed to respond to cytokinins, including the prospective cotyledons.

Its subcellular location is the cell membrane. Its function is as follows. Purine permease implicated in ATP-dependent cytokinin translocation that controls the spatiotemporal landscape of cytokinin signaling. Depletes ligands from the apoplast, which leads to a suppression of the cytokinin response. The polypeptide is Purine permease 14 (Arabidopsis thaliana (Mouse-ear cress)).